Here is a 391-residue protein sequence, read N- to C-terminus: uncharacterized protein (391 aa).

11 helical membrane-spanning segments follow: residues 15-35 (LSFC…LPIL), 48-68 (FLIG…QIPF), 81-101 (IIFG…TNSI), 139-159 (IIGV…PIIA), 167-187 (IFWI…FLIP), 217-237 (FYLG…IIPY), 251-271 (IVYF…VFYF), 275-295 (FFLK…LLLF), 303-323 (ICLT…EIFF), 346-366 (TSQF…CTFF), and 369-389 (NHIF…SFFC).

It belongs to the major facilitator superfamily.

It localises to the cell membrane. This is an uncharacterized protein from Buchnera aphidicola subsp. Schizaphis graminum (strain Sg).